A 388-amino-acid polypeptide reads, in one-letter code: Mitochondrial distribution and morphology protein 12 (388 aa).

Residues 1 to 388 (MSLDINWSLL…VFPNFHTVAL (388 aa)) enclose the SMP-LTD domain. Disordered stretches follow at residues 75 to 101 (DDEG…RNEA) and 209 to 251 (PMSI…SSSS). The span at 83 to 101 (EEKQREKEREERDKLRNEA) shows a compositional bias: basic and acidic residues. Residues 234–243 (PSPPAHPAGL) are compositionally biased toward pro residues.

This sequence belongs to the MDM12 family. Component of the ER-mitochondria encounter structure (ERMES) or MDM complex, composed of MMM1, MDM10, MDM12 and MDM34. An MMM1 homodimer associates with one molecule of MDM12 on each side in a pairwise head-to-tail manner, and the SMP-LTD domains of MMM1 and MDM12 generate a continuous hydrophobic tunnel for phospholipid trafficking.

It localises to the mitochondrion outer membrane. The protein localises to the endoplasmic reticulum membrane. Component of the ERMES/MDM complex, which serves as a molecular tether to connect the endoplasmic reticulum (ER) and mitochondria. Components of this complex are involved in the control of mitochondrial shape and protein biogenesis, and function in nonvesicular lipid trafficking between the ER and mitochondria. MDM12 is required for the interaction of the ER-resident membrane protein MMM1 and the outer mitochondrial membrane-resident beta-barrel protein MDM10. The MDM12-MMM1 subcomplex functions in the major beta-barrel assembly pathway that is responsible for biogenesis of all mitochondrial outer membrane beta-barrel proteins, and acts in a late step after the SAM complex. The MDM10-MDM12-MMM1 subcomplex further acts in the TOM40-specific pathway after the action of the MDM12-MMM1 complex. Essential for establishing and maintaining the structure of mitochondria and maintenance of mtDNA nucleoids. The polypeptide is Mitochondrial distribution and morphology protein 12 (Cryptococcus neoformans var. neoformans serotype D (strain B-3501A) (Filobasidiella neoformans)).